Here is a 370-residue protein sequence, read N- to C-terminus: F-box/kelch-repeat protein At4g38940 (370 aa).

Residues P18–R64 form the F-box domain. Kelch repeat units follow at residues N131 to R177, K178 to G230, and S263 to G315.

In terms of assembly, part of a SCF (ASK-cullin-F-box) protein ligase complex. Interacts with SKP1A/ASK1, SKP1B/ASK2, ASK11, ASK13 and ASK18.

The protein localises to the nucleus. It functions in the pathway protein modification; protein ubiquitination. Functionally, component of SCF(ASK-cullin-F-box) E3 ubiquitin ligase complexes, which may mediate the ubiquitination and subsequent proteasomal degradation of target proteins. This chain is F-box/kelch-repeat protein At4g38940, found in Arabidopsis thaliana (Mouse-ear cress).